A 325-amino-acid polypeptide reads, in one-letter code: Porphobilinogen deaminase (325 aa).

An S-(dipyrrolylmethanemethyl)cysteine modification is found at Cys253.

This sequence belongs to the HMBS family. Requires dipyrromethane as cofactor.

It catalyses the reaction 4 porphobilinogen + H2O = hydroxymethylbilane + 4 NH4(+). It functions in the pathway porphyrin-containing compound metabolism; protoporphyrin-IX biosynthesis; coproporphyrinogen-III from 5-aminolevulinate: step 2/4. Functionally, tetrapolymerization of the monopyrrole PBG into the hydroxymethylbilane pre-uroporphyrinogen in several discrete steps. This is Porphobilinogen deaminase (hemC) from Dictyostelium discoideum (Social amoeba).